A 504-amino-acid chain; its full sequence is Fumitremorgin C monooxygenase (504 aa).

Residues 12 to 32 (LGVVGASLIVILGIILLFPLG) form a helical membrane-spanning segment. Cys-442 lines the heme pocket.

It belongs to the cytochrome P450 family. Heme is required as a cofactor.

It localises to the membrane. It carries out the reaction fumitremorgin C + 2 reduced [NADPH--hemoprotein reductase] + 2 O2 = 12alpha,13alpha-dihydroxyfumitremorgin C + 2 oxidized [NADPH--hemoprotein reductase] + 2 H2O + 2 H(+). It participates in mycotoxin biosynthesis. Cytochrome P450 monooxygenase; part of the gene cluster that mediates the biosynthesis of fumitremorgins, indole alkaloids that carry not only intriguing chemical structures, but also interesting biological and pharmacological activities. The biosynthesis of fumitremorgin-type alkaloids begins by condensation of the two amino acids L-tryptophan and L-proline to brevianamide F, catalyzed by the non-ribosomal peptide synthetase ftmA. Brevianamide F is then prenylated by the prenyltransferase ftmPT1/ftmB in the presence of dimethylallyl diphosphate, resulting in the formation of tryprostatin B. The three cytochrome P450 monooxygenases, ftmP450-1/ftmC, ftmP450-2/ftmE and ftmP450-3/FtmG, are responsible for the conversion of tryprostatin B to 6-hydroxytryprostatin B, tryprostatin A to fumitremorgin C and fumitremorgin C to 12,13-dihydroxyfumitremorgin C, respectively. The putative methyltransferase ftmMT/ftmD is expected for the conversion of 6-hydroxytryprostatin B to tryprostatin A. FtmPT2/FtmH catalyzes the prenylation of 12,13-dihydroxyfumitre-morgin C in the presence of dimethylallyl diphosphate, resulting in the formation of fumitremorgin B. Fumitremorgin B is further converted to verruculogen by ftmOx1/ftmF via the insertion of an endoperoxide bond between the two prenyl moieties. In some fungal species, verruculogen is further converted to fumitremorgin A, but the enzymes involved in this step have not been identified yet. This is Fumitremorgin C monooxygenase from Aspergillus fumigatus (Neosartorya fumigata).